The chain runs to 378 residues: Queuine tRNA-ribosyltransferase (378 aa).

The active-site Proton acceptor is the aspartate 89. Residues 89–93, aspartate 143, glutamine 187, and glycine 214 each bind substrate; that span reads DSGGF. Positions 245 to 251 are RNA binding; it reads GVGKPED. The Nucleophile role is filled by aspartate 264. Positions 269–273 are RNA binding; important for wobble base 34 recognition; sequence TRNAR. Residues cysteine 302, cysteine 304, cysteine 307, and histidine 333 each coordinate Zn(2+).

This sequence belongs to the queuine tRNA-ribosyltransferase family. Homodimer. Within each dimer, one monomer is responsible for RNA recognition and catalysis, while the other monomer binds to the replacement base PreQ1. The cofactor is Zn(2+).

The enzyme catalyses 7-aminomethyl-7-carbaguanine + guanosine(34) in tRNA = 7-aminomethyl-7-carbaguanosine(34) in tRNA + guanine. It functions in the pathway tRNA modification; tRNA-queuosine biosynthesis. Its function is as follows. Catalyzes the base-exchange of a guanine (G) residue with the queuine precursor 7-aminomethyl-7-deazaguanine (PreQ1) at position 34 (anticodon wobble position) in tRNAs with GU(N) anticodons (tRNA-Asp, -Asn, -His and -Tyr). Catalysis occurs through a double-displacement mechanism. The nucleophile active site attacks the C1' of nucleotide 34 to detach the guanine base from the RNA, forming a covalent enzyme-RNA intermediate. The proton acceptor active site deprotonates the incoming PreQ1, allowing a nucleophilic attack on the C1' of the ribose to form the product. After dissociation, two additional enzymatic reactions on the tRNA convert PreQ1 to queuine (Q), resulting in the hypermodified nucleoside queuosine (7-(((4,5-cis-dihydroxy-2-cyclopenten-1-yl)amino)methyl)-7-deazaguanosine). This is Queuine tRNA-ribosyltransferase from Aeromonas hydrophila subsp. hydrophila (strain ATCC 7966 / DSM 30187 / BCRC 13018 / CCUG 14551 / JCM 1027 / KCTC 2358 / NCIMB 9240 / NCTC 8049).